We begin with the raw amino-acid sequence, 147 residues long: Hemoglobin subunit beta-1 (147 aa).

A Globin domain is found at 3–147 (EWTDKERSII…VVSALGKQYH (145 aa)). Heme b contacts are provided by histidine 64 and histidine 93.

Belongs to the globin family. Heterotetramer of two alpha chains and two beta chains. In terms of tissue distribution, red blood cells.

Functionally, involved in oxygen transport from gills to the various peripheral tissues. This chain is Hemoglobin subunit beta-1 (hbb1), found in Pagothenia borchgrevinki (Bald rockcod).